Reading from the N-terminus, the 651-residue chain is Lateral signaling target protein 2 (651 aa).

Residues 294–425 (VPEDSSSKLT…KENEEDVDEQ (132 aa)) form a disordered region. Residues 300-310 (SKLTMSDFRTN) are compositionally biased toward polar residues. The segment covering 345–363 (SEATSLASSGLTSPSSGSE) has biased composition (low complexity). Over residues 373-394 (SDEELDDDVIETASSEENESDS) the composition is skewed to acidic residues. The span at 395-412 (NNENVEMVASSGDSSETE) shows a compositional bias: low complexity. Residues 557-617 (DEDCEQCTAC…VCNLCYVHRL (61 aa)) form an FYVE-type zinc finger. 8 residues coordinate Zn(2+): C563, C566, C579, C582, C587, C590, C609, and C612.

The protein belongs to the lst-2 family.

In terms of biological role, negative regulator of epidermal growth factor receptor (EGFR) signaling. This Caenorhabditis briggsae protein is Lateral signaling target protein 2 (lst-2).